A 202-amino-acid chain; its full sequence is MEIQFTNTADRISVADSVFSAAYNEPLIHQVVVAYLAGARQGTKAQKTKAEVSGGGVKPWKQKGTGRARAGSIRSPLWRTGGKIFAAKPRSYVQKVNRKMYRSALCSIFSELNRIGRFIAVNALELTEPKTKSFLKLMQDHAFGDDLLLITESENINIFLASRNLPNVTVIDVQEINPALLLKHEKVIVDKAALEKINEWLS.

A disordered region spans residues 47-67; the sequence is KTKAEVSGGGVKPWKQKGTGR.

The protein belongs to the universal ribosomal protein uL4 family. As to quaternary structure, part of the 50S ribosomal subunit.

Its function is as follows. One of the primary rRNA binding proteins, this protein initially binds near the 5'-end of the 23S rRNA. It is important during the early stages of 50S assembly. It makes multiple contacts with different domains of the 23S rRNA in the assembled 50S subunit and ribosome. Functionally, forms part of the polypeptide exit tunnel. The sequence is that of Large ribosomal subunit protein uL4 from Dichelobacter nodosus (strain VCS1703A).